The primary structure comprises 298 residues: Arginase (298 aa).

Residues His-98, Asp-121, His-123, and Asp-125 each coordinate Mn(2+). Residues 123-127 (HGDLN), 134-136 (SGN), and Asp-177 contribute to the substrate site. 2 residues coordinate Mn(2+): Asp-225 and Asp-227. Thr-239 and Glu-270 together coordinate substrate.

It belongs to the arginase family. Requires Mn(2+) as cofactor.

The enzyme catalyses L-arginine + H2O = urea + L-ornithine. Its pathway is nitrogen metabolism; urea cycle; L-ornithine and urea from L-arginine: step 1/1. The protein is Arginase (rocF) of Brevibacillus brevis (Bacillus brevis).